Reading from the N-terminus, the 340-residue chain is DnaJ homolog subfamily B member 1 (340 aa).

The J domain occupies Gly2–Glu70. Thr307 is modified (phosphothreonine).

In terms of assembly, interacts with DNAJC3. Interacts with HSF1 (via transactivation domain); this interaction results in the inhibition of heat shock- and HSF1-induced transcriptional activity during the attenuation and recovery phase period of the heat shock response. Interacts with BAG3.

It localises to the cytoplasm. Its subcellular location is the nucleus. The protein localises to the nucleolus. Interacts with HSP70 and can stimulate its ATPase activity. Stimulates the association between HSC70 and HIP. Negatively regulates heat shock-induced HSF1 transcriptional activity during the attenuation and recovery phase period of the heat shock response. Stimulates ATP hydrolysis and the folding of unfolded proteins mediated by HSPA1A/B (in vitro). This chain is DnaJ homolog subfamily B member 1 (Dnajb1), found in Mus musculus (Mouse).